A 312-amino-acid polypeptide reads, in one-letter code: Ornithine carbamoyltransferase (312 aa).

Residues 57–60 (STRT), glutamine 84, arginine 108, and 135–138 (HPCQ) contribute to the carbamoyl phosphate site. Residues asparagine 166, aspartate 226, and 230-231 (SM) contribute to the L-ornithine site. Carbamoyl phosphate-binding positions include 265-266 (CL) and arginine 293.

It belongs to the aspartate/ornithine carbamoyltransferase superfamily. OTCase family.

The protein localises to the cytoplasm. The enzyme catalyses carbamoyl phosphate + L-ornithine = L-citrulline + phosphate + H(+). The protein operates within amino-acid biosynthesis; L-arginine biosynthesis; L-arginine from L-ornithine and carbamoyl phosphate: step 1/3. Its function is as follows. Reversibly catalyzes the transfer of the carbamoyl group from carbamoyl phosphate (CP) to the N(epsilon) atom of ornithine (ORN) to produce L-citrulline. The polypeptide is Ornithine carbamoyltransferase (Brucella ovis (strain ATCC 25840 / 63/290 / NCTC 10512)).